We begin with the raw amino-acid sequence, 499 residues long: MEKYIMALDQGTTSSRCILFNQRGEVCSVAQKEFTQVYPRTGWVEHRPMDIWSSQISVAAEAMAAIGAKAEDIDSIGITNQRETTIVWDKNTGEPVYNAIVWQCHRTADMIEQLKKDGFDSVIRKKTGLIPDAYFSATKIKWILDNVDGVRERAEAGSLLFGTVDTWIIWNLTKGRVHVTDYTNASRTMLFDIHNLCWDDEILTYFKIPKSMLPKVQASSSIFGHTEEGLLGGEILISGAAGDQQAALFGQCCFEPGEVKNTYGTGCFLLMNTGDTAIESQNGLLTTIAAGDAGHIEYALEGSVFVAGAAIQWLRDEQRMIKKASQSEEYAKEVEDTNGVYVVPAFTGLGAPYWNPYARGTIVGITRGFSKEHMIRATLESLAYQTVNVLHAMEQDSNISLKSLRVDGGASANNFLMQFQADVLNTLVYRPQCIETTALGAAYLAGLATGYFKDRNEIKDNWTLGGTFSPQMDEQKRKELLKGWKRAVRCALAWAEDIE.

Thr12 is a binding site for ADP. Residues Thr12, Thr13, and Ser14 each coordinate ATP. Residue Thr12 coordinates sn-glycerol 3-phosphate. Arg16 contributes to the ADP binding site. 4 residues coordinate sn-glycerol 3-phosphate: Arg82, Glu83, Tyr134, and Asp243. 5 residues coordinate glycerol: Arg82, Glu83, Tyr134, Asp243, and Gln244. 2 residues coordinate ADP: Thr265 and Gly308. ATP-binding residues include Thr265, Gly308, Gln312, and Gly409. Residues Gly409 and Asn413 each coordinate ADP.

Belongs to the FGGY kinase family. As to quaternary structure, homotetramer and homodimer (in equilibrium).

The enzyme catalyses glycerol + ATP = sn-glycerol 3-phosphate + ADP + H(+). The protein operates within polyol metabolism; glycerol degradation via glycerol kinase pathway; sn-glycerol 3-phosphate from glycerol: step 1/1. Its activity is regulated as follows. Activated by phosphorylation and inhibited by fructose 1,6-bisphosphate (FBP). Functionally, key enzyme in the regulation of glycerol uptake and metabolism. Catalyzes the phosphorylation of glycerol to yield sn-glycerol 3-phosphate. The sequence is that of Glycerol kinase from Lachnoclostridium phytofermentans (strain ATCC 700394 / DSM 18823 / ISDg) (Clostridium phytofermentans).